We begin with the raw amino-acid sequence, 504 residues long: uncharacterized protein (504 aa).

3 helical membrane passes run 146–166, 196–216, and 330–350; these read TSAG…INIA, SSAA…ADVL, and SMAL…VAVA. Residue 372-492 participates in a nucleoside 3',5'-cyclic phosphate binding; it reads FLNIDVPLQA…EIAYGVARTR (121 aa).

It localises to the cell membrane. This is an uncharacterized protein from Mycobacterium tuberculosis (strain CDC 1551 / Oshkosh).